Reading from the N-terminus, the 318-residue chain is MVSANQTASVTEFILLGLSAHPKLEKTFFVLILLMYLVILLGNGVLILMTVSNSHLHMPMYFFLGNLSFLDICYTTSSVPLILDSFLTPRKTISFSACAVQMFLSFAMGATECVLLSMMAFDRYVAICNPLRYPVVMSKAAYMPKAAGSWVAGSTASMVQTSLAMRLPFCGDNIINHFTCEILAVLKLACADISVNVISMGVTNVIFLGVPVLFISFSYVFIIATILRIPSAEGRKKAFSTCSAHLTVVVIFYGTILFMYGKPKSKDPLGADKQDLADKLISLFYGVVTPMLNPIIYSLRNKDVKAAVRDLIFQKCFA.

The Extracellular portion of the chain corresponds to Met-1–Thr-27. Residues Phe-28–Leu-48 traverse the membrane as a helical segment. At Met-49–Tyr-61 the chain is on the cytoplasmic side. A helical membrane pass occupies residues Phe-62–Ile-82. Residues Leu-83–Val-100 lie on the Extracellular side of the membrane. The chain crosses the membrane as a helical span at residues Gln-101–Phe-121. The Cytoplasmic segment spans residues Asp-122–Glu-181. The chain crosses the membrane as a helical span at residues Ile-182–Val-202. At Thr-203–Val-205 the chain is on the extracellular side. A helical membrane pass occupies residues Ile-206–Ile-226. Topologically, residues Leu-227–Ala-238 are cytoplasmic. A helical membrane pass occupies residues Phe-239 to Met-259. At Tyr-260–Asp-278 the chain is on the extracellular side. Residues Lys-279–Thr-289 traverse the membrane as a helical segment. At Pro-290–Ala-318 the chain is on the cytoplasmic side.

Belongs to the G-protein coupled receptor 1 family.

It is found in the cell membrane. Its function is as follows. Odorant receptor. This chain is Olfactory receptor 13C7, found in Homo sapiens (Human).